The sequence spans 152 residues: Large ribosomal subunit protein uL30 (152 aa).

The protein belongs to the universal ribosomal protein uL30 family. Part of the 50S ribosomal subunit.

The polypeptide is Large ribosomal subunit protein uL30 (Methanosphaera stadtmanae (strain ATCC 43021 / DSM 3091 / JCM 11832 / MCB-3)).